The following is a 645-amino-acid chain: 1-deoxy-D-xylulose-5-phosphate synthase (645 aa).

Thiamine diphosphate contacts are provided by residues His-79 and 120 to 122 (AHS). Position 155 (Asp-155) interacts with Mg(2+). Residues 156–157 (GA), Asn-184, Tyr-293, and Glu-375 each bind thiamine diphosphate. Asn-184 is a binding site for Mg(2+).

This sequence belongs to the transketolase family. DXPS subfamily. In terms of assembly, homodimer. It depends on Mg(2+) as a cofactor. Thiamine diphosphate is required as a cofactor.

The enzyme catalyses D-glyceraldehyde 3-phosphate + pyruvate + H(+) = 1-deoxy-D-xylulose 5-phosphate + CO2. It functions in the pathway metabolic intermediate biosynthesis; 1-deoxy-D-xylulose 5-phosphate biosynthesis; 1-deoxy-D-xylulose 5-phosphate from D-glyceraldehyde 3-phosphate and pyruvate: step 1/1. Its function is as follows. Catalyzes the acyloin condensation reaction between C atoms 2 and 3 of pyruvate and glyceraldehyde 3-phosphate to yield 1-deoxy-D-xylulose-5-phosphate (DXP). This chain is 1-deoxy-D-xylulose-5-phosphate synthase, found in Ruegeria sp. (strain TM1040) (Silicibacter sp.).